The chain runs to 185 residues: Inner membrane-spanning protein YciB (185 aa).

The next 5 membrane-spanning stretches (helical) occupy residues 27 to 47, 53 to 73, 76 to 96, 118 to 138, and 149 to 169; these read IVLVVATILQIVILKWKYGIV, IMASAVVFFGLLTAYFNEIRY, WKVTIINGLFAIVLLVAQFQF, TLNLGWALFFIICMLVNIYIS, and FKSFGIIGMTVIATIISGVYI.

Belongs to the YciB family.

The protein localises to the cell inner membrane. Plays a role in cell envelope biogenesis, maintenance of cell envelope integrity and membrane homeostasis. The protein is Inner membrane-spanning protein YciB of Haemophilus influenzae (strain 86-028NP).